Reading from the N-terminus, the 287-residue chain is Orotidine 5'-phosphate decarboxylase (287 aa).

K97 functions as the Proton donor in the catalytic mechanism.

This sequence belongs to the OMP decarboxylase family. Type 2 subfamily.

It carries out the reaction orotidine 5'-phosphate + H(+) = UMP + CO2. The protein operates within pyrimidine metabolism; UMP biosynthesis via de novo pathway; UMP from orotate: step 2/2. This is Orotidine 5'-phosphate decarboxylase from Clostridium perfringens (strain ATCC 13124 / DSM 756 / JCM 1290 / NCIMB 6125 / NCTC 8237 / Type A).